The primary structure comprises 527 residues: MDLHRAPWKSSAAAAVLLLALFSGAAASSVEKNLAACLRDNDYDQLLQTVQDGLPHINTSNHVVIVGAGVAGLTAAKLLQDAGHRVTIVEANSRIGGRVETYRNKEEGWYADLGAMRIPSDHSIFRWFAKTLGVKLNPFIMDDHNTFYFVNGLLKRTYTVEANPDILNYKVRSSEKGKSANTLFQDALQKVKDEVEAHGCRAALMKYDKYSAKEYLKEVAGLSSEALRMIGDLLNEQSLMYTALSEMIYDQADVNDNVQYDEVTGGTDLFPRAFLSVLDVPILLNSKVQRIRRSRDGVTVSFKESQRSSLTDLHADMVLVTTTAKAALYMDFEPSLSIRKMEALRAVHYDSSTKIILTFSSRFWEEDGIRGGKSITDRPSRYIYYPSHTFPANSSVGVLLASYTWSDDSLLLQAASDEELKEMALRDLVKIHGERVRALCTGVVVKKWSLDPYSFGAFALFTPYQHLEYAKELFRSEGRVHFAGEHTAFPHAWMESAMKSAIRAATNINKQTLLNEGMNECPAPDEL.

Residues Met-1 to Ala-27 form the signal peptide. Cys-37 and Cys-200 are joined by a disulfide. N-linked (GlcNAc...) asparagine glycosylation is present at Asn-58. FAD contacts are provided by residues Val-70–Ala-71, Glu-90–Ala-91, Arg-98, Gly-114–Arg-117, and Val-288. Arg-117 provides a ligand contact to substrate. A glycan (N-linked (GlcNAc...) asparagine) is linked at Asn-393. Residue Tyr-403 coordinates substrate. Residues Glu-485 and Ala-492–Ala-497 contribute to the FAD site. Ala-492–Trp-493 provides a ligand contact to substrate.

In terms of assembly, homodimer. FAD serves as cofactor. As to expression, expression mainly observed in plasma, spleen, kidney and gills with low levels detected in blood and no expression detected in brain, liver, heart, muscle or intestine (at protein level).

The protein localises to the secreted. It catalyses the reaction an L-alpha-amino acid + O2 + H2O = a 2-oxocarboxylate + H2O2 + NH4(+). Its function is as follows. Inhibits the growth of both Gram-negative and Gram-positive bacteria. Displays strong antibacterial activity towards V.cholerae and E.tarda. Causes deformation of the surface of S.aureus and the formation of pores on the surface of E.coli. Strong antiparasitic activity is seen towards C.irritans, T.brucei and I.multifiliis. Cilia of treated theronts are lost and the macronucleus swells, inducing cell membrane rupture and efflux of the cytoplasm. This is L-amino-acid oxidase from Siganus canaliculatus (White-spotted spinefoot).